We begin with the raw amino-acid sequence, 29 residues long: Toxin TdII-3 (29 aa).

The 29-residue stretch at 1–29 (KDGYLVGTDGCKYGCFTRPGHFCANEECL) folds into the LCN-type CS-alpha/beta domain.

It belongs to the long (4 C-C) scorpion toxin superfamily. Sodium channel inhibitor family. Beta subfamily. As to expression, expressed by the venom gland.

Its subcellular location is the secreted. In terms of biological role, binds voltage-independently to sodium channels (Nav) and shifts the voltage of activation toward more negative potentials. This toxin is active against mammals and also affects neuromuscular preparations of frog. This is Toxin TdII-3 from Tityus discrepans (Venezuelan scorpion).